The primary structure comprises 204 residues: Large ribosomal subunit protein eL15 (204 aa).

It belongs to the eukaryotic ribosomal protein eL15 family. Component of the large ribosomal subunit.

The protein resides in the cytoplasm. Component of the large ribosomal subunit. The ribosome is a large ribonucleoprotein complex responsible for the synthesis of proteins in the cell. In Monopterus albus (Swamp eel), this protein is Large ribosomal subunit protein eL15 (rpl15).